The primary structure comprises 47 residues: Large ribosomal subunit protein eL40 (47 aa).

This sequence belongs to the eukaryotic ribosomal protein eL40 family.

The polypeptide is Large ribosomal subunit protein eL40 (Methanococcus maripaludis (strain C5 / ATCC BAA-1333)).